We begin with the raw amino-acid sequence, 185 residues long: Transcription factor FapR (185 aa).

Belongs to the FapR family.

Functionally, transcriptional factor involved in regulation of membrane lipid biosynthesis by repressing genes involved in fatty acid and phospholipid metabolism. The polypeptide is Transcription factor FapR (Staphylococcus aureus (strain Mu3 / ATCC 700698)).